The primary structure comprises 192 residues: Peptidyl-tRNA hydrolase (192 aa).

TRNA is bound at residue His-17. His-22 functions as the Proton acceptor in the catalytic mechanism. TRNA-binding residues include Phe-68, Asn-70, and Asn-116.

It belongs to the PTH family. Monomer.

It localises to the cytoplasm. It catalyses the reaction an N-acyl-L-alpha-aminoacyl-tRNA + H2O = an N-acyl-L-amino acid + a tRNA + H(+). Hydrolyzes ribosome-free peptidyl-tRNAs (with 1 or more amino acids incorporated), which drop off the ribosome during protein synthesis, or as a result of ribosome stalling. Its function is as follows. Catalyzes the release of premature peptidyl moieties from peptidyl-tRNA molecules trapped in stalled 50S ribosomal subunits, and thus maintains levels of free tRNAs and 50S ribosomes. The sequence is that of Peptidyl-tRNA hydrolase from Xylella fastidiosa (strain 9a5c).